The chain runs to 620 residues: Chaperone protein DnaK (620 aa).

The segment at 579-620 (KAQKEASAGAEASEDASGPSSTGSASDDDVVDADYEVVDEDK) is disordered. Low complexity predominate over residues 583–603 (EASAGAEASEDASGPSSTGSA). Residues 604 to 620 (SDDDVVDADYEVVDEDK) show a composition bias toward acidic residues.

This sequence belongs to the heat shock protein 70 family.

Its function is as follows. Acts as a chaperone. This chain is Chaperone protein DnaK, found in Methanococcoides burtonii (strain DSM 6242 / NBRC 107633 / OCM 468 / ACE-M).